A 390-amino-acid polypeptide reads, in one-letter code: L-seryl-tRNA(Sec) selenium transferase (390 aa).

At K225 the chain carries N6-(pyridoxal phosphate)lysine.

It belongs to the SelA family. The cofactor is pyridoxal 5'-phosphate.

It localises to the cytoplasm. The catalysed reaction is L-seryl-tRNA(Sec) + selenophosphate + H(+) = L-selenocysteinyl-tRNA(Sec) + phosphate. It functions in the pathway aminoacyl-tRNA biosynthesis; selenocysteinyl-tRNA(Sec) biosynthesis; selenocysteinyl-tRNA(Sec) from L-seryl-tRNA(Sec) (bacterial route): step 1/1. Its function is as follows. Converts seryl-tRNA(Sec) to selenocysteinyl-tRNA(Sec) required for selenoprotein biosynthesis. In Helicobacter pylori (strain P12), this protein is L-seryl-tRNA(Sec) selenium transferase.